The sequence spans 216 residues: Refilin-A (216 aa).

The disordered stretch occupies residues 1–83; that stretch reads MVGHLHLQGM…LPNPPASEMR (83 aa). Over residues 12–22 the composition is skewed to basic and acidic residues; sequence DSLKEQGREGL. The span at 29 to 39 shows a compositional bias: pro residues; the sequence is GLPPSPSPSPP. A compositionally biased stretch (low complexity) spans 57 to 71; that stretch reads ASSEPPGPSEARAPP. Arg-163 is modified (asymmetric dimethylarginine).

This sequence belongs to the Refilin family. In terms of assembly, interacts with FLNA and FLNB.

The protein resides in the cytoplasm. It localises to the cytoskeleton. Functionally, involved in the regulation of the perinuclear actin network and nuclear shape through interaction with filamins. Plays an essential role in actin cytoskeleton formation in developing cartilaginous cells. This Homo sapiens (Human) protein is Refilin-A.